The following is a 659-amino-acid chain: Enzymatic polyprotein (659 aa).

A protease region spans residues 1-180 (MSLRNRTNPN…FLEEGGNHVD (180 aa)). Residue Asp34 is part of the active site. Positions 252–436 (LELKVIKPSK…EKINFLGLEI (185 aa)) constitute a Reverse transcriptase domain.

It belongs to the caulimoviridae enzymatic polyprotein family.

The enzyme catalyses DNA(n) + a 2'-deoxyribonucleoside 5'-triphosphate = DNA(n+1) + diphosphate. In terms of biological role, encodes for at least two polypeptides: protease (PR) and reverse transcriptase (RT). The protease processes the polyprotein in cis. Reverse transcriptase is multifunctional enzyme that converts the viral RNA genome into dsDNA in viral cytoplasmic capsids. This enzyme displays a DNA polymerase activity that can copy either DNA or RNA templates, and a ribonuclease H (RNase H) activity that cleaves the RNA strand of RNA-DNA heteroduplexes in a partially processive 3'- to 5'-endonucleasic mode. Neo-synthesized pregenomic RNA (pgRNA) are encapsidated, and reverse-transcribed inside the nucleocapsid. Partial (+)DNA is synthesized from the (-)DNA template and generates the relaxed circular DNA (RC-DNA) genome. After budding and infection, the RC-DNA migrates in the nucleus, and is converted into a plasmid-like covalently closed circular DNA (cccDNA). This is Enzymatic polyprotein from Dianthus caryophyllus (Carnation).